The following is a 29-amino-acid chain: Cyclotide mra2 (29 aa).

Cystine bridges form between cysteine 4/cysteine 19, cysteine 8/cysteine 21, and cysteine 13/cysteine 26.

Post-translationally, this is a cyclic peptide. In terms of processing, contains 3 disulfide bonds.

In terms of biological role, probably participates in a plant defense mechanism. This is Cyclotide mra2 from Melicytus ramiflorus (Whitey wood).